The following is a 131-amino-acid chain: Protein FON2 SPARE1 (131 aa).

The N-terminal stretch at 1-22 (MSRRLGAAAAVLLLWLAVLTFA) is a signal peptide. The segment at 67-131 (SPSSLTTTDR…VPTGPNPLHH (65 aa)) is disordered. The span at 76–97 (RHHHHHRHHGHHHHRGHDRWNR) shows a compositional bias: basic residues.

It belongs to the CLV3/ESR signal peptide family. In terms of tissue distribution, expressed in all aerial apical meristems, including the floral and inflorescence meristems in the reproductive phase and the shoot apical meristem in the vegetative phase. Also detected in the primordia of lateral organs such as the leaf and the floral organs.

The protein resides in the secreted. Its function is as follows. Involved in the maintenance of the floral meristem and of the shoot apical meristem in the vegetative phase. Suppresses the fon2 mutation and acts independently of FON1. In Oryza sativa subsp. japonica, the protein has a single amino acid substitution at the putative processing site of the signal peptide and is inactive. The protein is Protein FON2 SPARE1 (FOS1) of Oryza sativa subsp. indica (Rice).